Reading from the N-terminus, the 170-residue chain is Mitotic-spindle organizing protein 2B (170 aa).

Disordered regions lie at residues 1–26 and 102–170; these read MSRG…SPDA and SADS…GSST. The segment covering 8–20 has biased composition (low complexity); that stretch reads GSQAMASSQAAGP. The span at 123–132 shows a compositional bias: polar residues; the sequence is PNPTTSTTQG. Residues 151-170 show a composition bias toward low complexity; the sequence is SGSRMQKSSSSGKSSGGSST.

Belongs to the MOZART2 family. Part of the gamma-tubulin complex. Interacts with TUBG1.

The protein resides in the cytoplasm. The protein localises to the cytoskeleton. It localises to the microtubule organizing center. It is found in the centrosome. Its subcellular location is the spindle. The polypeptide is Mitotic-spindle organizing protein 2B (mzt2b) (Xenopus tropicalis (Western clawed frog)).